A 259-amino-acid chain; its full sequence is Ras-related protein Rab-34 (259 aa).

M1 is modified (N-acetylmethionine). GTP is bound by residues S62, V63, G64, K65, T66, D78, Y81, and T84. T66 serves as a coordination point for Mg(2+). The Switch 1 signature appears at 71 to 89 (RFCKDTFDKNYKATIGVDF). Positions 84 and 107 each coordinate Mg(2+). The short motif at 108 to 127 (TAGQERFKCIASTYYRGAQA) is the Switch 2 element. 4 residues coordinate GTP: G110, K167, D169, and S198. Phosphoserine is present on residues S241 and S244. Residues C257 and C258 are each lipidated (S-geranylgeranyl cysteine).

It belongs to the small GTPase superfamily. Rab family. As to quaternary structure, interacts with RILP. The GTP-bound form interacts with REP15. It depends on Mg(2+) as a cofactor.

The protein localises to the cytoplasm. The protein resides in the golgi apparatus. It is found in the cytoplasmic vesicle. It localises to the phagosome. Its subcellular location is the phagosome membrane. The protein localises to the cell projection. The protein resides in the cilium. It is found in the cytoskeleton. It localises to the microtubule organizing center. Its subcellular location is the centrosome. The protein localises to the centriole. It catalyses the reaction GTP + H2O = GDP + phosphate + H(+). With respect to regulation, regulated by guanine nucleotide exchange factors (GEFs) which promote the exchange of bound GDP for free GTP. Regulated by GTPase activating proteins (GAPs) which increase the GTP hydrolysis activity. Inhibited by GDP dissociation inhibitors (GDIs). Functionally, the small GTPases Rab are key regulators of intracellular membrane trafficking, from the formation of transport vesicles to their fusion with membranes. Rabs cycle between an inactive GDP-bound form and an active GTP-bound form that is able to recruit to membranes different sets of downstream effectors directly responsible for vesicle formation, movement, tethering and fusion. RAB34 transports protein involved in the redistribution of lysosomes to the peri-Golgi region. Plays a role in the maturation of phagosomes that engulf pathogens, such as S.aureus and M.tuberculosis. Plays a role in the fusion of phagosomes with lysosomes. Required for the early steps of intracellular ciliogenesis, the cilium assembly pathway initiated by trafficking and docking of ciliary vesicles to the centrioles in the cytoplasm, followed by axoneme formation in the cytoplasm. After axoneme elongation, the centrioles migrate close to the cell surface so that ciliary vesicles can fuse with the plasma membrane to expose cilia to the extracellular space. It seems dispensable for ciliogenesis via the extracellular pathway where cilium assembly begins after migration and docking of the centriole to the plasma membrane. Also acts as a positive regulator of hedgehog signaling and regulates ciliary function. The sequence is that of Ras-related protein Rab-34 (RAB34) from Sus scrofa (Pig).